A 188-amino-acid polypeptide reads, in one-letter code: Achaete-scute homolog 5 (188 aa).

Residues 80 to 93 (AFIQKRNERERQRV) form a basic motif region. The region spanning 80–132 (AFIQKRNERERQRVKCVNEGYARLRGHLPGALTEKRLSKVETLRAAIRYIKYL) is the bHLH domain. Residues 94–132 (KCVNEGYARLRGHLPGALTEKRLSKVETLRAAIRYIKYL) form a helix-loop-helix motif region. Positions 139–188 (TPDGAPPPATSPPPAHTGHSNVPQPSSLVAESSGSPFSSSPFLESEEPSL) are disordered. The span at 142-153 (GAPPPATSPPPA) shows a compositional bias: pro residues. A compositionally biased stretch (polar residues) spans 158 to 168 (SNVPQPSSLVA). The segment covering 169–181 (ESSGSPFSSSPFL) has biased composition (low complexity).

As to quaternary structure, interacts with transcription factor TCF3/E12. In terms of tissue distribution, expressed in teeth (at protein level).

The protein localises to the nucleus. Its function is as follows. Transcription factor. Probably binds E-box motifs 5'-CANNTG-3' in complex with transcription factor TCF3/E12. Negatively modulates transcription of target genes such as CDH1/E-cadherin, perhaps by recruiting the PRC2 repressive complex to regulatory elements. Regulates ameloblast development and tooth germ growth, perhaps acting by positively modulating migration of inner enamel epithelium (IEE) cells. Plays a role in enamel formation. The polypeptide is Achaete-scute homolog 5 (Mus musculus (Mouse)).